Consider the following 224-residue polypeptide: Large ribosomal subunit protein uL1c (224 aa).

Belongs to the universal ribosomal protein uL1 family. In terms of assembly, part of the 50S ribosomal subunit.

Its subcellular location is the plastid. It is found in the chloroplast. Its function is as follows. Binds directly to 23S rRNA. Might be involved in E site tRNA release (Potential). In Cyanidioschyzon merolae (strain NIES-3377 / 10D) (Unicellular red alga), this protein is Large ribosomal subunit protein uL1c (rpl1).